The sequence spans 212 residues: Ribosomal RNA small subunit methyltransferase G (212 aa).

S-adenosyl-L-methionine-binding positions include Gly-73, Phe-78, 124–125, and Arg-137; that span reads IE.

Belongs to the methyltransferase superfamily. RNA methyltransferase RsmG family.

Its subcellular location is the cytoplasm. Specifically methylates the N7 position of a guanine in 16S rRNA. This Karelsulcia muelleri (strain GWSS) (Sulcia muelleri) protein is Ribosomal RNA small subunit methyltransferase G.